Consider the following 459-residue polypeptide: Flagellar radial spoke protein 6 (459 aa).

Position 267 is an asymmetric dimethylarginine (arginine 267). Positions 309 to 330 are disordered; that stretch reads QGRTVTHKRDPPDEEEEPEKNF. Arginine 398 is subject to Asymmetric dimethylarginine. A disordered region spans residues 418 to 459; it reads CPPPPPVPQWGAPAAGVEGGQQLLLECNDLPPKPAPPEEEDE.

The protein belongs to the flagellar radial spoke RSP4/6 family. As to quaternary structure, the radial spoke head is made of five different polypeptides (RSP1, RSP4, RSP6, RSP9, and RSP10). In terms of processing, asymmetrically dimethylated at Arg-267 and Arg-398 during flagellum resorption. Probably methylated by PRMT1.

Its subcellular location is the cytoplasm. It localises to the cytoskeleton. It is found in the flagellum axoneme. Functionally, flagellar radial spokes contribute to the regulation of dynein arm activity and thus the pattern of flagellar bending. They consist of a thin stalk, which is attached to the a subfiber of the outer doublet microtubule, and a bulbous head, which is attached to the stalk and appears to interact with the projections from the central pair of microtubules. The chain is Flagellar radial spoke protein 6 (RSP6) from Chlamydomonas reinhardtii (Chlamydomonas smithii).